Reading from the N-terminus, the 1416-residue chain is DNA-directed RNA polymerase subunit beta (1416 aa).

The segment at 1388-1416 (AKAAREQAEGELGGPLGTPRGAAAEKNTA) is disordered.

It belongs to the RNA polymerase beta chain family. In terms of assembly, the RNAP catalytic core consists of 2 alpha, 1 beta, 1 beta' and 1 omega subunit. When a sigma factor is associated with the core the holoenzyme is formed, which can initiate transcription.

It carries out the reaction RNA(n) + a ribonucleoside 5'-triphosphate = RNA(n+1) + diphosphate. DNA-dependent RNA polymerase catalyzes the transcription of DNA into RNA using the four ribonucleoside triphosphates as substrates. This chain is DNA-directed RNA polymerase subunit beta, found in Anaeromyxobacter sp. (strain Fw109-5).